Consider the following 95-residue polypeptide: Co-chaperonin GroES (95 aa).

Belongs to the GroES chaperonin family. In terms of assembly, heptamer of 7 subunits arranged in a ring. Interacts with the chaperonin GroEL.

The protein resides in the cytoplasm. Together with the chaperonin GroEL, plays an essential role in assisting protein folding. The GroEL-GroES system forms a nano-cage that allows encapsulation of the non-native substrate proteins and provides a physical environment optimized to promote and accelerate protein folding. GroES binds to the apical surface of the GroEL ring, thereby capping the opening of the GroEL channel. The sequence is that of Co-chaperonin GroES from Streptococcus thermophilus (strain ATCC BAA-491 / LMD-9).